The chain runs to 272 residues: Ethanolamine ammonia-lyase small subunit (272 aa).

The adenosylcob(III)alamin site is built by Val161, Glu182, and Cys211.

The protein belongs to the EutC family. As to quaternary structure, the basic unit is a heterodimer which dimerizes to form tetramers. The heterotetramers trimerize; 6 large subunits form a core ring with 6 small subunits projecting outwards. Adenosylcob(III)alamin serves as cofactor.

It is found in the bacterial microcompartment. The catalysed reaction is ethanolamine = acetaldehyde + NH4(+). The protein operates within amine and polyamine degradation; ethanolamine degradation. Catalyzes the deamination of various vicinal amino-alcohols to oxo compounds. Allows this organism to utilize ethanolamine as the sole source of nitrogen and carbon in the presence of external vitamin B12. This is Ethanolamine ammonia-lyase small subunit from Xanthomonas campestris pv. campestris (strain B100).